A 259-amino-acid chain; its full sequence is 1,2-dihydroxy-1,2-dihydronaphthalene dehydrogenase (259 aa).

NAD(+) contacts are provided by residues 8-35 (AITG…SALV) and aspartate 58. Residue serine 140 coordinates substrate. Catalysis depends on tyrosine 153, which acts as the Proton acceptor. Lysine 157 is a binding site for NAD(+).

The protein belongs to the short-chain dehydrogenases/reductases (SDR) family.

It carries out the reaction (1R,2S)-1,2-dihydronaphthalene-1,2-diol + NAD(+) = naphthalene-1,2-diol + NADH + H(+). The protein operates within aromatic compound metabolism; naphthalene degradation. In terms of biological role, catalyzes the oxidation of naphthalene dihydrodiol into 1,2-dihydroxynaphthalene. The sequence is that of 1,2-dihydroxy-1,2-dihydronaphthalene dehydrogenase from Ralstonia sp.